Here is a 256-residue protein sequence, read N- to C-terminus: Probable aquaporin TIP-type alpha (256 aa).

At 1 to 24 the chain is on the cytoplasmic side; that stretch reads MATRRYSFGRTDEATHPDSMRASL. At S7 the chain carries Phosphoserine; by CPK. Residues 25 to 44 form a helical membrane-spanning segment; it reads AEFASTFIFVFAGEGSGLAL. The Vacuolar segment spans residues 45-57; sequence VKIYQDSAFSAGE. Residues 58-77 form a helical membrane-spanning segment; the sequence is LLALALAHAFALFAAVSASM. Over 78 to 102 the chain is Cytoplasmic; the sequence is HVSGGHVNPAVSFGALIGGRISVIR. Positions 85 to 87 match the NPA 1 motif; the sequence is NPA. Residues 103 to 121 form a helical membrane-spanning segment; sequence AVYYWIAQLLGSIVAALVL. Residues 122-143 are Vacuolar-facing; it reads RLVTNNMRPSGFHVSPGVGVGH. The helical transmembrane segment at 144-164 threads the bilayer; the sequence is MFILEVVMTFGLMYTVYGTAI. The Cytoplasmic segment spans residues 165 to 169; the sequence is DPKRG. Residues 170-189 form a helical membrane-spanning segment; it reads AVSYIAPLAIGLIVGANILV. At 190 to 216 the chain is on the vacuolar side; the sequence is GGPFDGACMNPALAFGPSLVGWQWHQH. Residues 199 to 201 carry the NPA 2 motif; the sequence is NPA. Residues 217–239 traverse the membrane as a helical segment; the sequence is WIFWVGPLLGAALAALVYEYAVI. Residues 240 to 256 lie on the Cytoplasmic side of the membrane; sequence PIEPPPHHHQPLATEDY.

This sequence belongs to the MIP/aquaporin (TC 1.A.8) family. TIP (TC 1.A.8.10) subfamily. In terms of processing, phosphorylated by a tonoplast-bound calcium-dependent protein kinase. As to expression, found in all seed tissues that are alive at seed maturity, but not in tissues that lose viability during seed maturation.

The protein resides in the vacuole membrane. Channel protein in tonoplast. These proteins may allow the diffusion of amino acids and/or peptides from the vacuolar compartment to the cytoplasm. This chain is Probable aquaporin TIP-type alpha, found in Phaseolus vulgaris (Kidney bean).